A 203-amino-acid polypeptide reads, in one-letter code: MKVVAFERNLQGTGASRRLRNSGKAPGIVYGAGEPQLIELDHNALWHALKKEAFHSSILELEVAGKSQQVLLRDVQYHPFRQLVLHVDFQRVDAKKKLHTKVPLHFMNQETNPAVKLGGAIISHVINEIEIECLPAALPEFIEVDLAKIEAGQSLHATDIALPAGVALVAHLVAENPVIVSAPIPAGAQSEEAAAEGEKPAAE.

This sequence belongs to the bacterial ribosomal protein bL25 family. CTC subfamily. As to quaternary structure, part of the 50S ribosomal subunit; part of the 5S rRNA/L5/L18/L25 subcomplex. Contacts the 5S rRNA. Binds to the 5S rRNA independently of L5 and L18.

This is one of the proteins that binds to the 5S RNA in the ribosome where it forms part of the central protuberance. The chain is Large ribosomal subunit protein bL25 from Paraburkholderia phymatum (strain DSM 17167 / CIP 108236 / LMG 21445 / STM815) (Burkholderia phymatum).